Here is a 2116-residue protein sequence, read N- to C-terminus: Non-structural polyprotein p200 (2116 aa).

Residues 36–49 (EVRDVVSAAQKRAI) form a required for efficient proteolysis and P150-P90 interaction region. The Alphavirus-like MT domain maps to 57–247 (VFTQMQVSDH…TRPCTTRIYQ (191 aa)). Residues 715-781 (GQFAATSPPP…SPTSAEPADR (67 aa)) are disordered. Pro residues-rich tracts occupy residues 721 to 730 (SPPPGDPPPP) and 745 to 767 (TPPP…PPRA). 3 consecutive short sequence motifs (pxxPxR; class II SH3-binding) follow at residues 727-732 (PPPPRR), 747-752 (PPAPAR), and 761-766 (PPAPPR). The 180-residue stretch at 806–985 (SDIVESYARA…LTHASVLVGA (180 aa)) folds into the Macro domain. The interval 991–1030 (RVSPPPTEPLASCPAGDLGRPAQRSASPPATPLGDATAPE) is disordered. The 302-residue stretch at 1000 to 1301 (LASCPAGDLG…WLAVPLSRGG (302 aa)) folds into the Peptidase C27 domain. Cysteine 1152 serves as the catalytic For cysteine protease activity. The segment at 1152–1183 (CWLRAAANVAQAARACGAYTSAGCPKCAYGRA) is interaction with host CALM1. Zn(2+) is bound by residues cysteine 1175, cysteine 1178, cysteine 1227, and histidine 1273. Residues 1193 to 1228 (FAALSQRWSASHADASPDGTGDPLDPLMETVGCACS) form an EF-hand-like region. The active-site For cysteine protease activity is histidine 1273. The (+)RNA virus helicase ATP-binding domain occupies 1320-1468 (EVRRLGDDAM…VPDRWPTERS (149 aa)). 1352-1359 (MAAGAGKT) contributes to the a ribonucleoside 5'-triphosphate binding site. The (+)RNA virus helicase C-terminal domain occupies 1469 to 1609 (RHTWRFPDCW…ELKEVPAGID (141 aa)). The tract at residues 1700–1900 (YRAGEDGSTL…VELEISAALL (201 aa)) is involved in P150-P90 interaction. The region spanning 1870–1981 (TNAIEVDFTE…FLPEGARSAA (112 aa)) is the RdRp catalytic domain. Residues 1902-1906 (LPCAE) carry the Human RB1 binding motif.

As to quaternary structure, interacts with RNA-directed RNA polymerase p90. Interacts with host CALM1; this interaction is necessary for the protease activity and viral infectivity. Interacts with host C1QBP. Interacts with the capsid protein. Interacts with human RB1/retinoblastoma protein. Interacts with protease/methyltransferase p150. Zn(2+) serves as cofactor. Post-translationally, specific enzymatic cleavage by its own cysteine protease yield mature proteins p150 and p90.

The protein localises to the host membrane. It localises to the host cytoplasm. It is found in the host perinuclear region. The enzyme catalyses RNA(n) + a ribonucleoside 5'-triphosphate = RNA(n+1) + diphosphate. It carries out the reaction a ribonucleoside 5'-triphosphate + H2O = a ribonucleoside 5'-diphosphate + phosphate + H(+). It catalyses the reaction ATP + H2O = ADP + phosphate + H(+). Probable principal replicase for the negative-strand DNA, which replicates the 40S (+) genomic RNA into (-) antigenomic RNA. It cannot replicate the (-) into (+) until cleaved into p150 and p90 mature proteins. Functionally, protease that cleaves the precursor polyprotein into two mature products. Together with RNA-directed RNA polymerase p90, replicates the 40S genomic and antigenomic RNA by recognizing replications specific signals. The heterodimer P150/p90 is probably the principal replicase for positive-strand genomic RNA and the 24S subgenomic RNA, which codes for structural proteins. Responsible for the mRNA-capping of the viral mRNAs. This function is necessary since all viral RNAs are synthesized in the cytoplasm, and host capping enzymes are restricted to the nucleus. Forms fibers late in the infection that may be involved in cell-to-cell spread of the virus RNA in the absence of virus particle formation. Its function is as follows. Together with protease/methyltransferase p150, replicates the 40S genomic and antigenomic RNA by recognizing replications specific signals. The heterodimer P150/p90 is probably the principal replicase for positive-strand genomic RNA and the 24S subgenomic RNA, which codes for structural proteins. A helicase activity is probably also present. The polypeptide is Non-structural polyprotein p200 (Homo sapiens (Human)).